The chain runs to 301 residues: Pyridoxal 5'-phosphate synthase subunit PdxS (301 aa).

A D-ribose 5-phosphate-binding site is contributed by aspartate 31. The Schiff-base intermediate with D-ribose 5-phosphate role is filled by lysine 88. Residue glycine 160 coordinates D-ribose 5-phosphate. Lysine 172 provides a ligand contact to D-glyceraldehyde 3-phosphate. D-ribose 5-phosphate contacts are provided by residues glycine 221 and 242 to 243 (GS).

The protein belongs to the PdxS/SNZ family. In the presence of PdxT, forms a dodecamer of heterodimers.

It catalyses the reaction aldehydo-D-ribose 5-phosphate + D-glyceraldehyde 3-phosphate + L-glutamine = pyridoxal 5'-phosphate + L-glutamate + phosphate + 3 H2O + H(+). The protein operates within cofactor biosynthesis; pyridoxal 5'-phosphate biosynthesis. Functionally, catalyzes the formation of pyridoxal 5'-phosphate from ribose 5-phosphate (RBP), glyceraldehyde 3-phosphate (G3P) and ammonia. The ammonia is provided by the PdxT subunit. Can also use ribulose 5-phosphate and dihydroxyacetone phosphate as substrates, resulting from enzyme-catalyzed isomerization of RBP and G3P, respectively. The sequence is that of Pyridoxal 5'-phosphate synthase subunit PdxS from Methanosarcina acetivorans (strain ATCC 35395 / DSM 2834 / JCM 12185 / C2A).